The chain runs to 281 residues: 2-dehydro-3-deoxyphosphooctonate aldolase (281 aa).

The protein belongs to the KdsA family.

Its subcellular location is the cytoplasm. It carries out the reaction D-arabinose 5-phosphate + phosphoenolpyruvate + H2O = 3-deoxy-alpha-D-manno-2-octulosonate-8-phosphate + phosphate. Its pathway is carbohydrate biosynthesis; 3-deoxy-D-manno-octulosonate biosynthesis; 3-deoxy-D-manno-octulosonate from D-ribulose 5-phosphate: step 2/3. It functions in the pathway bacterial outer membrane biogenesis; lipopolysaccharide biosynthesis. In Pseudomonas fluorescens (strain Pf0-1), this protein is 2-dehydro-3-deoxyphosphooctonate aldolase.